Here is a 342-residue protein sequence, read N- to C-terminus: Probable endoglucanase (342 aa).

Positions 1–20 (MSVMAAMGGAQVLSSTGAFA) are cleaved as a signal peptide. Glu57 serves as the catalytic Proton donor. Asp114 functions as the Nucleophile in the catalytic mechanism.

Belongs to the glycosyl hydrolase 8 (cellulase D) family.

Its subcellular location is the secreted. It catalyses the reaction Endohydrolysis of (1-&gt;4)-beta-D-glucosidic linkages in cellulose, lichenin and cereal beta-D-glucans.. In terms of biological role, enzyme capable of hydrolyzing carboxy-methyl-cellulose (CMC). The polypeptide is Probable endoglucanase (cmcAX) (Novacetimonas hansenii (Komagataeibacter hansenii)).